The sequence spans 209 residues: High frequency lysogenization protein HflD homolog (209 aa).

The protein belongs to the HflD family.

The protein localises to the cytoplasm. Its subcellular location is the cell inner membrane. This chain is High frequency lysogenization protein HflD homolog, found in Proteus mirabilis (strain HI4320).